The primary structure comprises 326 residues: MRLPVTVKATKPSFLVIWIRYSSAASSPTVSLNPSGRLQQTLAGSVEVKGKSLHSGKFSTVKLNPEIAGAGRFFEFRSRFIPASIEFAQESPLCTTLLKDELKIRTVEHLLSALEAKGVDNCRIQIESESSDDREVEVPIFDGSAKEWVDAIQGVGINAAQNHDGESVEKMVAHVNKPVYVCKNDTFVAAFPALETRITCGIDFPQVPAIGCQWFSWRPIHESSFAKDIASSRTFCVYEEVERMREAGLIKGGSLDNAIVCSAEHGWMNPPLRFDDEACRHKILDLIGDLSLVSRGGNGGLPVAHIVAYKAGHALHTDLARHLTMD.

The N-terminal 21 residues, M1–Y21, are a transit peptide targeting the mitochondrion. 3 residues coordinate Zn(2+): H109, H281, and D285.

Belongs to the LpxC family. The cofactor is Zn(2+).

The protein localises to the mitochondrion. It catalyses the reaction a UDP-3-O-[(3R)-3-hydroxyacyl]-N-acetyl-alpha-D-glucosamine + H2O = a UDP-3-O-[(3R)-3-hydroxyacyl]-alpha-D-glucosamine + acetate. Its pathway is glycolipid biosynthesis; lipid IV(A) biosynthesis; lipid IV(A) from (3R)-3-hydroxytetradecanoyl-[acyl-carrier-protein] and UDP-N-acetyl-alpha-D-glucosamine: step 2/6. Functionally, involved in the biosynthesis of lipid A, a phosphorylated glycolipid that in bacteria anchors the lipopolysaccharide to the outer membrane of the cell. Lipid A-like molecules in plants may serve as structural components of the outer membranes of mitochondria and/or chloroplasts, or may be involved in signal transduction or plant defense responses (Potential). This chain is Probable UDP-3-O-acyl-N-acetylglucosamine deacetylase 2, mitochondrial (LPXC2), found in Arabidopsis thaliana (Mouse-ear cress).